The primary structure comprises 436 residues: UPF0229 protein Meso_0256 (436 aa).

Residues 53 to 110 (PMPARGTSEPTFRPDRSSGERGYILPGNKEFAPGDRLPKPGASGGEGGTGAGRGGSDD) are disordered. Residues 94–106 (ASGGEGGTGAGRG) are compositionally biased toward gly residues.

Belongs to the UPF0229 family.

This Chelativorans sp. (strain BNC1) protein is UPF0229 protein Meso_0256.